The following is a 338-amino-acid chain: Anthocyanidin reductase ((2S)-flavan-3-ol-forming) (338 aa).

NADP(+) contacts are provided by residues 18–21 (TGFV), K48, 87–90 (VATP), and Y168.

The protein belongs to the NAD(P)-dependent epimerase/dehydratase family. Dihydroflavonol-4-reductase subfamily.

It catalyses the reaction a (2S,3R)-flavan-3-ol + 2 NADP(+) = an anthocyanidin with a 3-hydroxy group + 2 NADPH + 2 H(+). It carries out the reaction a (2S,3S)-flavan-3-ol + 2 NADP(+) = an anthocyanidin with a 3-hydroxy group + 2 NADPH + 2 H(+). It participates in secondary metabolite biosynthesis; flavonoid biosynthesis. Produces the terminal flavan-3-ol monomers required for the formation of proanthocyanidins or condensed tannins in leaves and flowers, as well as in the skin and seeds of developing berries. Behaves as a reductase and as a C-3 epimerase. Catalyzes the double reduction of anthocyanidins, producing a mixture of (2S,3S)- and (2S,3R)-flavan-3-ols. The enzyme catalyzes sequential hydride transfers to C-2 and C-4, respectively and epimerization at C-3 is achieved by tautomerization that occurs between the two hydride transfers. Converts cyanidin, pelargonidin and delphinidin into catechin and epicatechin, afzelechin and epiafzelechin, and gallocatechin and epigallocatechin respectively. The polypeptide is Anthocyanidin reductase ((2S)-flavan-3-ol-forming) (Vitis vinifera (Grape)).